Here is a 182-residue protein sequence, read N- to C-terminus: Orotate phosphoribosyltransferase (182 aa).

5-phospho-alpha-D-ribose 1-diphosphate is bound by residues Arg-91, Lys-92, Lys-95, His-97, and 117–125; that span reads EDVTTTGGS. Orotate-binding residues include Thr-121 and Arg-149.

This sequence belongs to the purine/pyrimidine phosphoribosyltransferase family. PyrE subfamily. As to quaternary structure, homodimer. The cofactor is Mg(2+).

It catalyses the reaction orotidine 5'-phosphate + diphosphate = orotate + 5-phospho-alpha-D-ribose 1-diphosphate. The protein operates within pyrimidine metabolism; UMP biosynthesis via de novo pathway; UMP from orotate: step 1/2. Catalyzes the transfer of a ribosyl phosphate group from 5-phosphoribose 1-diphosphate to orotate, leading to the formation of orotidine monophosphate (OMP). This chain is Orotate phosphoribosyltransferase, found in Pyrococcus abyssi (strain GE5 / Orsay).